The chain runs to 326 residues: Putative replication protein B (326 aa).

The protein belongs to the ParB family.

In Sinorhizobium fredii (strain NBRC 101917 / NGR234), this protein is Putative replication protein B.